The sequence spans 301 residues: Nucleotide-binding protein Rfer_1653 (301 aa).

Residue 15 to 22 (GMSGSGKS) coordinates ATP. GTP is bound at residue 64-67 (DVRT).

Belongs to the RapZ-like family.

Functionally, displays ATPase and GTPase activities. This is Nucleotide-binding protein Rfer_1653 from Albidiferax ferrireducens (strain ATCC BAA-621 / DSM 15236 / T118) (Rhodoferax ferrireducens).